The following is a 404-amino-acid chain: uncharacterized protein (404 aa).

Positions 1 to 22 are enriched in polar residues; the sequence is MASSINNSSQPTVPSISNNSHG. Residues 1–110 form a disordered region; the sequence is MASSINNSSQ…QQTPVKRRRR (110 aa). Position 47 is a phosphothreonine (threonine 47). Positions 87 to 104 are enriched in polar residues; that stretch reads SRGSSLKSHLETESQQTP. A PHD-type zinc finger spans residues 117–166; sequence VDYCSACGGRGLFICCEGCPCSFHLSCLEPPLTPENIPEGSWFCVTCSIK.

This is an uncharacterized protein from Schizosaccharomyces pombe (strain 972 / ATCC 24843) (Fission yeast).